We begin with the raw amino-acid sequence, 415 residues long: Histidine--tRNA ligase (415 aa).

This sequence belongs to the class-II aminoacyl-tRNA synthetase family. Homodimer.

The protein resides in the cytoplasm. The catalysed reaction is tRNA(His) + L-histidine + ATP = L-histidyl-tRNA(His) + AMP + diphosphate + H(+). The chain is Histidine--tRNA ligase from Clostridium perfringens (strain ATCC 13124 / DSM 756 / JCM 1290 / NCIMB 6125 / NCTC 8237 / Type A).